Reading from the N-terminus, the 496-residue chain is Stomatal closure-related actin-binding protein 1 (496 aa).

Positions 126-269 form a coiled coil; the sequence is RNKDDVEEAI…FLQLQKKLAM (144 aa).

Belongs to the SCAB family. In terms of assembly, dimer. Dimerization is required for actin-binding activity. Expressed in roots, stems, leaves, flowers, siliques and guard cells.

It localises to the cytoplasm. Its subcellular location is the cytoskeleton. Its function is as follows. Plant-specific actin binding protein that bundles and stabilizes microfilaments (MFs). Has no nucleation or capping activity. Regulates MF reorganization during stomatal closure. The binding to F-actin is insensitive to Ca(2+) and pH. Binds weakly to inositol phosphates. In Arabidopsis thaliana (Mouse-ear cress), this protein is Stomatal closure-related actin-binding protein 1.